The primary structure comprises 96 residues: uncharacterized protein (96 aa).

Positions 1–19 are cleaved as a signal peptide; that stretch reads MKQIIPALITLSFSPMAIA.

This is an uncharacterized protein from Synechocystis sp. (strain ATCC 27184 / PCC 6803 / Kazusa).